The primary structure comprises 697 residues: Choline transporter-like protein 2 (697 aa).

At 1–30 (MDMEEKPKYGEPRKFDPSFKGPIQNRGCTD) the chain is on the cytoplasmic side. Residues 31-51 (IVCCIIFIIAILGYLAVGILA) traverse the membrane as a helical segment. The Extracellular segment spans residues 52-226 (WTHGDPRKVI…KIFEDYTKSW (175 aa)). N113 and N204 each carry an N-linked (GlcNAc...) asparagine glycan. Residues 227–247 (YWILICLLIAVVLSLIFIVLL) traverse the membrane as a helical segment. The Cytoplasmic segment spans residues 248–249 (RF). Residues 250-270 (LAGVMVWVMILMVVAVIAYGI) traverse the membrane as a helical segment. Over 271–309 (AHCSIKYVSLKDTPGSNITLQQLGFQPDFAVYLHIRQTW) the chain is Extracellular. N-linked (GlcNAc...) asparagine glycosylation occurs at N287. The chain crosses the membrane as a helical span at residues 310–330 (LAFIIILAILELIIILLLIFL). Topologically, residues 331–353 (RNRIRVAVELMKEASRAIGYVMS) are cytoplasmic. A helical transmembrane segment spans residues 354 to 374 (SLVFPIFTFFLLAIVIAFWGV). Residues 375-435 (NAVFLSTSSE…YGGETPYHKY (61 aa)) are Extracellular-facing. N391 and N406 each carry an N-linked (GlcNAc...) asparagine glycan. Residues 436-456 (LILLQFYNVFLFFWCANFVTA) form a helical membrane-spanning segment. Residues 457–498 (LGQMTLAGAFASYYWAFDKSKDMPAFPLCASLGRSLRYHTGS) are Cytoplasmic-facing. A helical transmembrane segment spans residues 499–519 (LAFGSLLLAIVQVIRVLLEYI). Over 520–593 (DHKLKGAENK…RVVVLDKVTD (74 aa)) the chain is Extracellular. The chain crosses the membrane as a helical span at residues 594–614 (FILFLGKLLIVGLVGIFAFFF). At 615–632 (FSGQTDAFKGTAPSLHYY) the chain is on the cytoplasmic side. A helical transmembrane segment spans residues 633-653 (WVPILTVLVCSYLIAHGFFSV). Topologically, residues 654-697 (YAMCVDTLFLCFLEDLERNDGSAERPYLMSENLLNVLKKKNQAN) are extracellular.

This sequence belongs to the CTL (choline transporter-like) family.

Its subcellular location is the cell membrane. It is found in the mitochondrion outer membrane. It catalyses the reaction choline(out) + n H(+)(in) = choline(in) + n H(+)(out). It carries out the reaction ethanolamine(out) + n H(+)(in) = ethanolamine(in) + n H(+)(out). Its function is as follows. Choline/H+ antiporter, mainly in mitochodria. Also acts as a low-affinity ethanolamine/H+ antiporter, regulating the supply of extracellular ethanolamine (Etn) for the CDP-Etn pathway, redistribute intracellular Etn and balance the CDP-Cho and CDP-Etn arms of the Kennedy pathway. In Danio rerio (Zebrafish), this protein is Choline transporter-like protein 2 (slc44a2).